Consider the following 287-residue polypeptide: Ribonuclease Z (287 aa).

His64, His66, Asp68, His69, His124, Asp191, and His250 together coordinate Zn(2+). Asp68 acts as the Proton acceptor in catalysis.

Belongs to the RNase Z family. In terms of assembly, homodimer. Requires Zn(2+) as cofactor.

It carries out the reaction Endonucleolytic cleavage of RNA, removing extra 3' nucleotides from tRNA precursor, generating 3' termini of tRNAs. A 3'-hydroxy group is left at the tRNA terminus and a 5'-phosphoryl group is left at the trailer molecule.. Functionally, zinc phosphodiesterase, which displays some tRNA 3'-processing endonuclease activity. Probably involved in tRNA maturation, by removing a 3'-trailer from precursor tRNA. This Pyrobaculum arsenaticum (strain DSM 13514 / JCM 11321 / PZ6) protein is Ribonuclease Z.